Consider the following 174-residue polypeptide: Squamosa promoter-binding-like protein 4 (174 aa).

The interval 1–42 (MEGKRSQGQGYMKKKSYLVEEDMETDTDEEEEVGRDRVRGSR) is disordered. Acidic residues predominate over residues 19-33 (VEEDMETDTDEEEEV). An SBP-type zinc finger spans residues 51–128 (LRLCQVDRCT…AGHNERRRKS (78 aa)). 8 residues coordinate Zn(2+): Cys54, Cys59, Cys76, His79, Cys95, Cys98, His102, and Cys114. Positions 111 to 127 (KRSCRRRLAGHNERRRK) match the Bipartite nuclear localization signal motif. Positions 118–127 (LAGHNERRRK) are enriched in basic residues. Disordered stretches follow at residues 118–148 (LAGH…GQVV) and 155–174 (SRVE…PQIR). A compositionally biased stretch (polar residues) spans 163 to 174 (MPNSSFKRPQIR).

It depends on Zn(2+) as a cofactor. As to expression, expressed in the rib meristem and inter-primordial tissue of the inflorescence apex.

It localises to the nucleus. Its subcellular location is the cytoplasm. Functionally, trans-acting factor that binds specifically to the consensus nucleotide sequence 5'-TNCGTACAA-3' of AP1 promoter. Promotes both vegetative phase change and flowering. The protein is Squamosa promoter-binding-like protein 4 (SPL4) of Arabidopsis thaliana (Mouse-ear cress).